An 89-amino-acid polypeptide reads, in one-letter code: MSENMNIKSKIITQFGVNSKDSGKSEVQIALLTNRINYLQNHFSLHKKDHCSRRGLLNMVSKRRKLLNYLKDENISRYINIINQLKLRR.

This sequence belongs to the universal ribosomal protein uS15 family. In terms of assembly, part of the 30S ribosomal subunit. Forms a bridge to the 50S subunit in the 70S ribosome, contacting the 23S rRNA.

Its function is as follows. One of the primary rRNA binding proteins, it binds directly to 16S rRNA where it helps nucleate assembly of the platform of the 30S subunit by binding and bridging several RNA helices of the 16S rRNA. Forms an intersubunit bridge (bridge B4) with the 23S rRNA of the 50S subunit in the ribosome. The chain is Small ribosomal subunit protein uS15 from Buchnera aphidicola subsp. Baizongia pistaciae (strain Bp).